Reading from the N-terminus, the 236-residue chain is Ubiquinone biosynthesis O-methyltransferase (236 aa).

S-adenosyl-L-methionine is bound by residues arginine 39, glycine 59, aspartate 80, and methionine 124.

This sequence belongs to the methyltransferase superfamily. UbiG/COQ3 family.

It catalyses the reaction a 3-demethylubiquinol + S-adenosyl-L-methionine = a ubiquinol + S-adenosyl-L-homocysteine + H(+). The enzyme catalyses a 3-(all-trans-polyprenyl)benzene-1,2-diol + S-adenosyl-L-methionine = a 2-methoxy-6-(all-trans-polyprenyl)phenol + S-adenosyl-L-homocysteine + H(+). The protein operates within cofactor biosynthesis; ubiquinone biosynthesis. O-methyltransferase that catalyzes the 2 O-methylation steps in the ubiquinone biosynthetic pathway. This is Ubiquinone biosynthesis O-methyltransferase from Shewanella putrefaciens (strain CN-32 / ATCC BAA-453).